The following is a 247-amino-acid chain: Fibroblast growth factor 14 (247 aa).

2 disordered regions span residues 1 to 38 (MAAA…KNRG) and 214 to 247 (VGET…SKTT). Positions 15–25 (QAREQHWDRPS) are enriched in basic and acidic residues.

The protein belongs to the heparin-binding growth factors family. As to quaternary structure, interacts with SCN8A. As to expression, nervous system.

The protein resides in the nucleus. Functionally, probably involved in nervous system development and function. This is Fibroblast growth factor 14 (FGF14) from Homo sapiens (Human).